The sequence spans 482 residues: MKFIIKLFPEITIKSKSVRQRFTKMLQGNIRNVLRRFDEDARVRMDWDKLVVSSRNDQFHAQYLETLACIPGIQYFLEVKLSNFTDLHDIFEQTRAVWGDRLKGKTFCVRARRVGKHDFSSLELERYVGGGLNQHCETAGVRLKKPDIQVNLEVENDELYIISAVHHGMGGFPMATQEDVLSLLSGGFDSGVASYQFIKRGCRVHYCFFNLGGAAHEIGVKQVAYYLWSKFGASHKVRFTAIDFEPVVAEILEKVDNGQMGVVLKRMMMRAAGQVADYFQIPALVTGECVGQVSSQTLTNLNVIDRVTDKVILRPLITWDKPDIISEARRIGTLEFAETMPEYCGVISKKPTIKAVLSNIEAEEANFDFAILDKVVSEARYLDIRRIGEETAAEVQEIETTEVLAADEVILDIRSADERDEKPLVVEGRDVLHIPFFKLATAFGDLPKEQTYLLYCDRGVMSKLQALYLKEKGFDNVKVYRP.

Positions 61 to 165 (AQYLETLACI…NDELYIISAV (105 aa)) constitute a THUMP domain. ATP-binding positions include 183–184 (LL), Lys265, Gly287, and Gln296. The cysteines at positions 344 and 456 are disulfide-linked. Positions 404–482 (LAADEVILDI…GFDNVKVYRP (79 aa)) constitute a Rhodanese domain. Cys456 (cysteine persulfide intermediate) is an active-site residue.

This sequence belongs to the ThiI family.

The protein resides in the cytoplasm. The enzyme catalyses [ThiI sulfur-carrier protein]-S-sulfanyl-L-cysteine + a uridine in tRNA + 2 reduced [2Fe-2S]-[ferredoxin] + ATP + H(+) = [ThiI sulfur-carrier protein]-L-cysteine + a 4-thiouridine in tRNA + 2 oxidized [2Fe-2S]-[ferredoxin] + AMP + diphosphate. The catalysed reaction is [ThiS sulfur-carrier protein]-C-terminal Gly-Gly-AMP + S-sulfanyl-L-cysteinyl-[cysteine desulfurase] + AH2 = [ThiS sulfur-carrier protein]-C-terminal-Gly-aminoethanethioate + L-cysteinyl-[cysteine desulfurase] + A + AMP + 2 H(+). The protein operates within cofactor biosynthesis; thiamine diphosphate biosynthesis. Catalyzes the ATP-dependent transfer of a sulfur to tRNA to produce 4-thiouridine in position 8 of tRNAs, which functions as a near-UV photosensor. Also catalyzes the transfer of sulfur to the sulfur carrier protein ThiS, forming ThiS-thiocarboxylate. This is a step in the synthesis of thiazole, in the thiamine biosynthesis pathway. The sulfur is donated as persulfide by IscS. This chain is tRNA sulfurtransferase, found in Aeromonas salmonicida (strain A449).